Here is a 189-residue protein sequence, read N- to C-terminus: Elongation factor P (189 aa).

The protein belongs to the elongation factor P family.

The protein localises to the cytoplasm. It participates in protein biosynthesis; polypeptide chain elongation. Functionally, involved in peptide bond synthesis. Stimulates efficient translation and peptide-bond synthesis on native or reconstituted 70S ribosomes in vitro. Probably functions indirectly by altering the affinity of the ribosome for aminoacyl-tRNA, thus increasing their reactivity as acceptors for peptidyl transferase. The polypeptide is Elongation factor P (Sinorhizobium medicae (strain WSM419) (Ensifer medicae)).